A 533-amino-acid chain; its full sequence is MIYGRSLFHIIASLIILHSSGATKKGTEKQITPETQKSVQCGTWTKHAEGGVFTSPNYPSKYPPDRECVYIIEAAPRQCIELYFDEKYSIEPSWECKFDHIEVRDGPFGFSPIIGRFCGQQNPPVIKSSGRFLWIKFFADGELESMGFSARYNFTPDPDFKDLGVLKPLPACEFEMGGPEGIVESIQILKEGKASASEAVDCKWYIRAPPRSKIYLRFLDYEMQNSNECKRNFVAVYDGSSSVEDLKAKFCSTVANDVMLRTGLGVIRMWADEGSRNSRFQMLFTSFQEPPCEGNTFFCHSNMCINNTLVCNGLQNCVYPWDENHCKEKRKTSLLDQLTNTSGTVIGVTSCIVIILIIVSVIVQIKQPRKKYVQRKSDFDQTVFQEVFEPPHYELCTLRGTGATADFADVAEDFENYHKLRRSSSKCIHDHHCGSQLSSAKGSRSNLSTRDASILAEIPTQPVKPLIPPVNRRNILVMKHNYSQDAADACDIDEIEEVPTTSHRLSRHEKSVQRFCLIGSLSKHESEYNTTRV.

Positions 1 to 22 are cleaved as a signal peptide; the sequence is MIYGRSLFHIIASLIILHSSGA. Over 23–344 the chain is Extracellular; sequence TKKGTEKQIT…LDQLTNTSGT (322 aa). Disulfide bonds link cysteine 41–cysteine 68, cysteine 96–cysteine 118, cysteine 172–cysteine 202, cysteine 229–cysteine 251, cysteine 292–cysteine 304, cysteine 299–cysteine 317, and cysteine 311–cysteine 326. CUB domains are found at residues 41–155 and 172–287; these read CGTW…YNFT and CEFE…FTSF. The LDL-receptor class A domain occupies 291-327; sequence PCEGNTFFCHSNMCINNTLVCNGLQNCVYPWDENHCK. The N-linked (GlcNAc...) asparagine glycan is linked to asparagine 306. The N-linked (GlcNAc...) asparagine glycan is linked to asparagine 340. A helical transmembrane segment spans residues 345–365; it reads VIGVTSCIVIILIIVSVIVQI. Topologically, residues 366-533 are cytoplasmic; the sequence is KQPRKKYVQR…HESEYNTTRV (168 aa). Position 417 is a phosphotyrosine (tyrosine 417). Residues 531 to 533 carry the PDZ-binding motif; the sequence is TRV.

Interacts with PLZ domains of DLG2, DLG3 and DLG4 via its C-terminal TRV domain. Interacts with GRIN2A and GRIN2B via its CUB domains. In terms of tissue distribution, expressed only in brain. Present throughout the central nervous system. Highly expressed in the hippocampal CA3 region, olfactory bulb and tubercle, caudate putamen, and neocortex in the adult brain.

Its subcellular location is the membrane. It is found in the postsynaptic density membrane. Involved in the development and/or maintenance of neuronal circuitry. Accessory subunit of the neuronal N-methyl-D-aspartate receptor (NMDAR) critical for maintaining the abundance of GRIN2A-containing NMDARs in the postsynaptic density. Regulates long-term NMDA receptor-dependent synaptic plasticity and cognition, at least in the context of spatial learning and memory. This Mus musculus (Mouse) protein is Neuropilin and tolloid-like protein 1 (Neto1).